The sequence spans 420 residues: Pre-mRNA-splicing factor RBM22 (420 aa).

A C3H1-type zinc finger spans residues 159-186 (RNRPHICSFWVKGECKRGEECPYRHEKP). Residues 232 to 305 (TTLYVGGLGD…RRLNVKWGRS (74 aa)) form the RRM domain. Disordered stretches follow at residues 303–343 (GRSQ…AAEE) and 372–420 (APPP…HSSP). The span at 309 to 318 (RGKEKDKEGT) shows a compositional bias: basic and acidic residues.

This sequence belongs to the SLT11 family. Component of the pre-catalytic and catalytic spliceosome complexes. Component of the postcatalytic spliceosome P complex.

It localises to the nucleus. Its subcellular location is the cytoplasm. Its function is as follows. Required for pre-mRNA splicing as component of the activated spliceosome. Involved in the first step of pre-mRNA splicing. Binds directly to the internal stem-loop (ISL) domain of the U6 snRNA and to the pre-mRNA intron near the 5' splice site during the activation and catalytic phases of the spliceosome cycle. In Gallus gallus (Chicken), this protein is Pre-mRNA-splicing factor RBM22 (RBM22).